We begin with the raw amino-acid sequence, 67 residues long: Protein SlyX homolog (67 aa).

This sequence belongs to the SlyX family.

The chain is Protein SlyX homolog from Thiobacillus denitrificans (strain ATCC 25259 / T1).